We begin with the raw amino-acid sequence, 154 residues long: Myoglobin (154 aa).

Positions 2–148 (GLSDQEWQHV…FRNDMASKYK (147 aa)) constitute a Globin domain. A nitrite-binding site is contributed by histidine 65. Position 65 (histidine 65) interacts with O2. Residue histidine 94 coordinates heme b.

Monomeric.

The protein localises to the cytoplasm. It is found in the sarcoplasm. It catalyses the reaction Fe(III)-heme b-[protein] + nitric oxide + H2O = Fe(II)-heme b-[protein] + nitrite + 2 H(+). The catalysed reaction is H2O2 + AH2 = A + 2 H2O. Its function is as follows. Monomeric heme protein which primary function is to store oxygen and facilitate its diffusion within muscle tissues. Reversibly binds oxygen through a pentacoordinated heme iron and enables its timely and efficient release as needed during periods of heightened demand. Depending on the oxidative conditions of tissues and cells, and in addition to its ability to bind oxygen, it also has a nitrite reductase activity whereby it regulates the production of bioactive nitric oxide. Under stress conditions, like hypoxia and anoxia, it also protects cells against reactive oxygen species thanks to its pseudoperoxidase activity. The polypeptide is Myoglobin (Dromaius novaehollandiae (Emu)).